The sequence spans 282 residues: Bis(5'-nucleosyl)-tetraphosphatase, symmetrical (282 aa).

This sequence belongs to the Ap4A hydrolase family.

The catalysed reaction is P(1),P(4)-bis(5'-adenosyl) tetraphosphate + H2O = 2 ADP + 2 H(+). In terms of biological role, hydrolyzes diadenosine 5',5'''-P1,P4-tetraphosphate to yield ADP. In Burkholderia thailandensis (strain ATCC 700388 / DSM 13276 / CCUG 48851 / CIP 106301 / E264), this protein is Bis(5'-nucleosyl)-tetraphosphatase, symmetrical.